The following is a 432-amino-acid chain: Adenylosuccinate synthetase (432 aa).

GTP-binding positions include glycine 12–lysine 18 and glycine 40–threonine 42. The active-site Proton acceptor is aspartate 13. Residues aspartate 13 and glycine 40 each coordinate Mg(2+). IMP-binding positions include aspartate 13–lysine 16, asparagine 38–histidine 41, threonine 130, arginine 144, glutamine 225, threonine 240, and arginine 304. Residue histidine 41 is the Proton donor of the active site. Substrate is bound at residue serine 300–arginine 306. GTP-binding positions include arginine 306, lysine 332 to aspartate 334, and serine 414 to glycine 416.

This sequence belongs to the adenylosuccinate synthetase family. As to quaternary structure, homodimer. Requires Mg(2+) as cofactor.

The protein resides in the cytoplasm. It catalyses the reaction IMP + L-aspartate + GTP = N(6)-(1,2-dicarboxyethyl)-AMP + GDP + phosphate + 2 H(+). The protein operates within purine metabolism; AMP biosynthesis via de novo pathway; AMP from IMP: step 1/2. Plays an important role in the de novo pathway of purine nucleotide biosynthesis. Catalyzes the first committed step in the biosynthesis of AMP from IMP. The chain is Adenylosuccinate synthetase from Geobacter sp. (strain M21).